Here is a 209-residue protein sequence, read N- to C-terminus: Small ribosomal subunit protein uS4 (209 aa).

The interval 22 to 45 (RGRNPLLRKPNPPGQHGMQRKKKS) is disordered. Residues 93–154 (CRLDNIVYRL…KSKRLAIVTE (62 aa)) enclose the S4 RNA-binding domain.

This sequence belongs to the universal ribosomal protein uS4 family. Part of the 30S ribosomal subunit. Contacts protein S5. The interaction surface between S4 and S5 is involved in control of translational fidelity.

Its function is as follows. One of the primary rRNA binding proteins, it binds directly to 16S rRNA where it nucleates assembly of the body of the 30S subunit. With S5 and S12 plays an important role in translational accuracy. This Chlamydia trachomatis serovar A (strain ATCC VR-571B / DSM 19440 / HAR-13) protein is Small ribosomal subunit protein uS4.